The primary structure comprises 176 residues: Putative phosphohydrolase YueE (176 aa).

In terms of domain architecture, HD spans 23-139 (GVAHAIACAY…VKKADELDEE (117 aa)).

The chain is Putative phosphohydrolase YueE (yueE) from Bacillus subtilis (strain 168).